Here is a 952-residue protein sequence, read N- to C-terminus: Eukaryotic translation initiation factor 3 subunit A (952 aa).

The 177-residue stretch at 315–491 folds into the PCI domain; sequence HAERAGIVND…QTITFVSTPP (177 aa). The stretch at 522–849 forms a coiled coil; the sequence is DAFAAAIAQA…RRQAEKAAAT (328 aa). A compositionally biased stretch (basic and acidic residues) spans 757–797; it reads EKVIKRKREEKERKLKEAREAEERKRKEEEEAAQKAEEEAR. A disordered region spans residues 757-952; sequence EKVIKRKREE…RGMPSTRGGA (196 aa). Positions 798–809 are enriched in low complexity; sequence AAAALEAEAAAA. A compositionally biased stretch (basic and acidic residues) spans 810-844; it reads EQRRAEREAQRQSDLERIRAQQEREEEALRRRQAE. 2 stretches are compositionally biased toward low complexity: residues 856–878 and 893–918; these read RPPA…GGPS and GAPV…SNGP.

Belongs to the eIF-3 subunit A family. Component of the eukaryotic translation initiation factor 3 (eIF-3) complex.

The protein localises to the cytoplasm. In terms of biological role, RNA-binding component of the eukaryotic translation initiation factor 3 (eIF-3) complex, which is involved in protein synthesis of a specialized repertoire of mRNAs and, together with other initiation factors, stimulates binding of mRNA and methionyl-tRNAi to the 40S ribosome. The eIF-3 complex specifically targets and initiates translation of a subset of mRNAs involved in cell proliferation. This chain is Eukaryotic translation initiation factor 3 subunit A, found in Cryptococcus neoformans var. neoformans serotype D (strain B-3501A) (Filobasidiella neoformans).